A 258-amino-acid chain; its full sequence is Glucanase inhibitor protein 1 (258 aa).

The first 19 residues, 1–19 (MRVVPTLAAASLALGAVAG), serve as a signal peptide directing secretion. In terms of domain architecture, Peptidase S1 spans 27–254 (ILGGGEVPIG…AIEWITSVTK (228 aa)). An intrachain disulfide couples cysteine 54 to cysteine 70. Asparagine 87, asparagine 102, asparagine 107, asparagine 157, and asparagine 185 each carry an N-linked (GlcNAc...) asparagine glycan. 2 cysteine pairs are disulfide-bonded: cysteine 177/cysteine 189 and cysteine 199/cysteine 230.

This sequence belongs to the peptidase S1 family. In terms of assembly, forms an apoplastic complex with host endoglucanases in tomato leaves during P.infestans infection.

It localises to the secreted. Its function is as follows. Secreted effector that suppresses host plant glucan elicitor-mediated defense responses. Targets host endoglucanases and inhibits the endoglucanase-mediated release of elicitor-active glucan oligosaccharides from P.infestans cell walls. This chain is Glucanase inhibitor protein 1, found in Phytophthora infestans (Potato late blight agent).